Consider the following 2161-residue polypeptide: SH3 and multiple ankyrin repeat domains protein 1 (2161 aa).

Positions 1–53 (MTHSPATSEDEERHSASECPEGGSESDSSPDGPGRGPRGTRGQGSGAPGSLAS) are disordered. The segment covering 17 to 32 (SECPEGGSESDSSPDG) has biased composition (low complexity). The segment covering 33 to 47 (PGRGPRGTRGQGSGA) has biased composition (gly residues). Tyr186 is modified (phosphotyrosine). ANK repeat units lie at residues 212–245 (SGETPLTLAAQTEGSVEVIRTLCLGGAHIDFRAR), 246–278 (DGMTALHKAACARHCLALTALLDLGGSPNYKDR), 279–312 (RGLTPLFHTAMVGGDPRCCELLLFNRAQLGIADE), 313–345 (NGWQEIHQACQRGHSQHLEHLLFYGAEPGAQNA), 346–378 (SGNTALHICALYNKETCARILLYRGADKDVKNN), and 379–395 (NGQTPFQVAVIAGNFEL). Disordered regions lie at residues 412–433 (ESPKYAARRRGPPGTGLTVPPA) and 455–546 (GAAS…SRGR). A compositionally biased stretch (low complexity) spans 455–479 (GAASSGAPGPTSGSQGQSQPSAPTT). Positions 527 to 542 (PAGGTGGSGGPGGSLG) are enriched in gly residues. Phosphoserine is present on Ser540. Residue Arg544 is modified to Omega-N-methylarginine. An SH3 domain is found at 554–613 (VPGRSFMAVKSYQAQAEGEISLSKGEKIKVLSIGEGGFWEGQVKGRVGWFPSDCLEEVAN). One can recognise a PDZ domain in the interval 663 to 757 (TVLLQKKDSE…TLMVKVVMVT (95 aa)). Phosphoserine is present on residues Ser671 and Ser791. Positions 832 to 886 (TISASESPGPGGLASLGKHRPKGFFATESSFDPHHRAQPSYERPSFLPPGPGLML) are disordered. Ser890 bears the Phosphoserine mark. 7 disordered regions span residues 909–1229 (SRSL…LDFT), 1241–1289 (RREG…KSID), 1353–1720 (LGLA…GVAS), 1734–1785 (GQAF…PTSP), 1827–1860 (LPTASSLPRKLLPWEEGPGPPPPPLPGPLAQPQA), 1892–1983 (PWAR…TRHL), and 1996–2023 (RRAPSPSLLPASEHKVSPAPRPSSLPIL). Residues 920-939 (IPPPPTTSPPEPPYSTPPVP) show a composition bias toward pro residues. Arg950 bears the Omega-N-methylarginine mark. The span at 996–1020 (AHHHPPHHHHHHAPPPQPHHHHAHP) shows a compositional bias: basic residues. Residues Arg1051, Arg1090, and Arg1101 each carry the omega-N-methylarginine modification. The segment covering 1127–1144 (PPAPSPTSPASPQPPPAV) has biased composition (pro residues). A compositionally biased stretch (low complexity) spans 1164–1181 (STSSSGRSSQGSSTEAEP). Residues 1199 to 1220 (SPAPAMSPVPPSPSPVPTPASP) show a composition bias toward pro residues. Basic and acidic residues predominate over residues 1241–1252 (RREGGWQNEARR). Residue Arg1253 is modified to Asymmetric dimethylarginine. A Phosphoserine modification is found at Ser1287. Over residues 1359-1368 (ARERALKESS) the composition is skewed to basic and acidic residues. The segment covering 1374 to 1391 (PQPPPRPPSPRYEAPPPT) has biased composition (pro residues). At Arg1423 the chain carries Omega-N-methylarginine. Ser1436 carries the phosphoserine modification. Pro residues-rich tracts occupy residues 1517–1532 (GVPPPSPRRSVPPSPT) and 1583–1609 (PLTPGPPHPLPDTPAPATPLPPVPPPA). The segment covering 1618 to 1636 (DSTASSLTSYDSEVATLTQ) has biased composition (polar residues). The segment covering 1644-1670 (DPHPPGPPAPAAPAPAAPQPGPDPPPG) has biased composition (pro residues). Positions 1678-1688 (VDSRSSSDHPL) are enriched in basic and acidic residues. The segment covering 1692 to 1702 (SSASTLSSLSA) has biased composition (low complexity). Gly residues-rich tracts occupy residues 1703-1718 (EGGGSAGGGGGAGAGV) and 1764-1774 (ASGGLRPGPSG). Low complexity predominate over residues 1775–1785 (GLRDPVTPTSP). Over residues 1844-1855 (PGPPPPPLPGPL) the composition is skewed to pro residues. Arg1895 carries the omega-N-methylarginine modification. 3 stretches are compositionally biased toward low complexity: residues 1917-1940 (SSLQRQRLSDDSQSSLLSKPVSSL), 1954-1980 (TGTGVSPTAAAAPGATSPSASSSSTST), and 1996-2006 (RRAPSPSLLPA). An omega-N-methylarginine mark is found at Arg2016, Arg2036, and Arg2074. Residues 2098 to 2161 (WTKFDVADWL…DRALKFFLER (64 aa)) form the SAM domain.

The protein belongs to the SHANK family. As to quaternary structure, may homomultimerize via its SAM domain. Interacts with the C-terminus of SSTR2 via the PDZ domain. Interacts with IGSF9, SHARPIN, SPTAN1, HOMER1 and DLGAP1/GKAP isoforms 1 and 2. Part of a complex with DLG4/PSD-95 and DLGAP1/GKAP. Interacts with BAIAP2. Interacts with HOMER1 and HOMER3. As to expression, expressed in brain particularly in the amygdala, hippocampus, substantia nigra and thalamus. Isoform 2 seems to be expressed ubiquitously.

The protein localises to the cytoplasm. It localises to the postsynaptic density. It is found in the synapse. In terms of biological role, seems to be an adapter protein in the postsynaptic density (PSD) of excitatory synapses that interconnects receptors of the postsynaptic membrane including NMDA-type and metabotropic glutamate receptors via complexes with GKAP/PSD-95 and Homer, respectively, and the actin-based cytoskeleton. Plays a role in the structural and functional organization of the dendritic spine and synaptic junction. This chain is SH3 and multiple ankyrin repeat domains protein 1 (SHANK1), found in Homo sapiens (Human).